The sequence spans 977 residues: Probable UDP-N-acetylglucosamine--peptide N-acetylglucosaminyltransferase SEC (977 aa).

TPR repeat units follow at residues 2 to 35 (ISSK…SVSS), 53 to 86 (DDAR…NPLR), 87 to 120 (TDNL…QPQF), 121 to 154 (AECY…RPNF), 155 to 188 (ADAW…NPLL), 189 to 222 (VDAH…QPTF), 223 to 256 (AIAW…KPAF), 257 to 290 (PDAY…RPNS), 291 to 324 (AMAF…DPRF), 325 to 358 (LEAY…QPNH), 359 to 392 (PQAM…TTGL), 393 to 426 (SAPF…DPLA), 427 to 460 (ADAL…RPTM), and 461 to 494 (AEAH…RPDF). A catalytic region region spans residues 495-977 (PEATCNLLHT…ENDLEFPHDR (483 aa)).

The protein belongs to the glycosyltransferase 41 family. O-GlcNAc transferase subfamily. As to quaternary structure, interacts with TCP14 and TCP15. Interacts with ATX1.

The catalysed reaction is L-seryl-[protein] + UDP-N-acetyl-alpha-D-glucosamine = 3-O-(N-acetyl-beta-D-glucosaminyl)-L-seryl-[protein] + UDP + H(+). It catalyses the reaction L-threonyl-[protein] + UDP-N-acetyl-alpha-D-glucosamine = 3-O-(N-acetyl-beta-D-glucosaminyl)-L-threonyl-[protein] + UDP + H(+). It functions in the pathway protein modification; protein glycosylation. Its function is as follows. O-linked N-acetylglucosamine transferase (OGT) that mediates O-glycosylation of capsid protein (CP) of virus in case of infection by Plum pox virus. OGTs catalyze the addition of nucleotide-activated sugars directly onto the polypeptide through O-glycosidic linkage with the hydroxyl of serine or threonine. Probably acts by adding O-linked sugars to yet unknown proteins. Its OGT activity has been proved in vitro but not in vivo. Required with SPY for gamete and seed development. Mediates O-glycosylation of the DELLA protein RGA, a repressor of the gibberellin (GA) signaling pathway. O-glycosylation by SEC inhibits RGA binding to four of its interactors PIF3, PIF4, JAZ1, and BZR1 that are key regulators in light, jasmonate, and brassinosteroid signaling pathways, respectively. Activates ATX1 through O-GlcNAc modification to augment ATX1-mediated H3K4me3 histone epigenetic modification at FLC locus, thus preventing premature flowering. This chain is Probable UDP-N-acetylglucosamine--peptide N-acetylglucosaminyltransferase SEC, found in Arabidopsis thaliana (Mouse-ear cress).